We begin with the raw amino-acid sequence, 102 residues long: UPF0213 protein Spro_0507 (102 aa).

Residues 6–81 (PTWHLYMLRM…KQLSKTQKER (76 aa)) form the GIY-YIG domain.

Belongs to the UPF0213 family.

In Serratia proteamaculans (strain 568), this protein is UPF0213 protein Spro_0507.